A 695-amino-acid chain; its full sequence is Elongation factor G (695 aa).

The region spanning 12–286 is the tr-type G domain; sequence DKLRNIGIMA…AVIDYLPSPL (275 aa). GTP-binding positions include 21 to 28, 85 to 89, and 139 to 142; these read AHIDAGKT, DTPGH, and NKMD.

This sequence belongs to the TRAFAC class translation factor GTPase superfamily. Classic translation factor GTPase family. EF-G/EF-2 subfamily.

It is found in the cytoplasm. In terms of biological role, catalyzes the GTP-dependent ribosomal translocation step during translation elongation. During this step, the ribosome changes from the pre-translocational (PRE) to the post-translocational (POST) state as the newly formed A-site-bound peptidyl-tRNA and P-site-bound deacylated tRNA move to the P and E sites, respectively. Catalyzes the coordinated movement of the two tRNA molecules, the mRNA and conformational changes in the ribosome. The polypeptide is Elongation factor G (Thermotoga petrophila (strain ATCC BAA-488 / DSM 13995 / JCM 10881 / RKU-1)).